A 211-amino-acid chain; its full sequence is uncharacterized protein (211 aa).

Positions Leu-187–Asp-211 are disordered. Basic and acidic residues predominate over residues Glu-201–Asp-211.

This is an uncharacterized protein from Spiroplasma citri.